Here is a 414-residue protein sequence, read N- to C-terminus: 2,3-diketo-5-methylthiopentyl-1-phosphate enolase (414 aa).

Catalysis depends on Lys99, which acts as the Proton acceptor. Residues Lys148, 174–177 (KDDE), His265, Gly338, and 360–361 (GG) contribute to the substrate site. Mg(2+) is bound by residues Lys174, Asp176, and Glu177. Residue Lys174 is modified to N6-carboxylysine.

Belongs to the RuBisCO large chain family. Type IV subfamily. Homodimer. It depends on Mg(2+) as a cofactor.

The enzyme catalyses 5-methylsulfanyl-2,3-dioxopentyl phosphate = 2-hydroxy-5-methylsulfanyl-3-oxopent-1-enyl phosphate. It functions in the pathway amino-acid biosynthesis; L-methionine biosynthesis via salvage pathway; L-methionine from S-methyl-5-thio-alpha-D-ribose 1-phosphate: step 3/6. Functionally, catalyzes the enolization of 2,3-diketo-5-methylthiopentyl-1-phosphate (DK-MTP-1-P) into 2-hydroxy-3-keto-5-methylthiopentenyl-1-phosphate (HK-MTPenyl-1-P). This is 2,3-diketo-5-methylthiopentyl-1-phosphate enolase from Bacillus cereus (strain G9842).